We begin with the raw amino-acid sequence, 550 residues long: Zinc finger protein 382 (550 aa).

Residues 1–105 (MPLQGSVSFK…RHSRPLIFIN (105 aa)) are mediates interaction with TRIM28. Represses transcription regions lie at residues 5–46 (GSVS…FVSV) and 70–211 (IFPS…PEQP). Residues 7-78 (VSFKDVTVDF…RIFPSYSYLE (72 aa)) enclose the KRAB domain. The C2H2-type 1; degenerate zinc finger occupies 212-234 (FDHNECEKSFLMKGMLFTHTRAH). 9 consecutive C2H2-type zinc fingers follow at residues 296–318 (FHCP…QRIH), 324–346 (YVCN…EKTH), 352–374 (FICI…HKTH), 380–402 (YECP…QRTH), 408–430 (YQCN…QRTH), 436–458 (YICN…QRIH), 464–486 (YICN…HRIH), 492–514 (NGCP…QKTH), and 520–542 (YECK…QKTH). The tract at residues 296 to 550 (FHCPYCGNNF…THKVETTGIQ (255 aa)) is required for transcriptional repression activity; probably mediates sequence-specific DNA-binding.

Belongs to the krueppel C2H2-type zinc-finger protein family. In terms of assembly, interacts with TRIM28; enhances the transcriptional repressor activity. In terms of tissue distribution, specifically expressed in heart with a weaker expression also detected in skeletal muscle.

It is found in the nucleus. Functions as a sequence-specific transcriptional repressor. This chain is Zinc finger protein 382 (ZNF382), found in Homo sapiens (Human).